A 303-amino-acid polypeptide reads, in one-letter code: 2-dehydropantoate 2-reductase (303 aa).

NADP(+) is bound by residues 7 to 12 (GCGALG), asparagine 98, and alanine 122. Position 98 (asparagine 98) interacts with substrate. Lysine 176 acts as the Proton donor in catalysis. Positions 180, 184, 194, and 244 each coordinate substrate. NADP(+) is bound at residue glutamate 256.

This sequence belongs to the ketopantoate reductase family. As to quaternary structure, monomer.

Its subcellular location is the cytoplasm. The catalysed reaction is (R)-pantoate + NADP(+) = 2-dehydropantoate + NADPH + H(+). The protein operates within cofactor biosynthesis; (R)-pantothenate biosynthesis; (R)-pantoate from 3-methyl-2-oxobutanoate: step 2/2. Its function is as follows. Catalyzes the NADPH-dependent reduction of ketopantoate into pantoic acid. This chain is 2-dehydropantoate 2-reductase (panE), found in Shigella flexneri.